Consider the following 620-residue polypeptide: UvrABC system protein C (620 aa).

Residues 13–92 (DKPGVYIMKN…IKKYSPRYNI (80 aa)) form the GIY-YIG domain. The 36-residue stretch at 204–239 (TSIIKKLKLEMEKAAEELEFEKAAKIRDRILAIELI) folds into the UVR domain.

This sequence belongs to the UvrC family. In terms of assembly, interacts with UvrB in an incision complex.

The protein resides in the cytoplasm. Its function is as follows. The UvrABC repair system catalyzes the recognition and processing of DNA lesions. UvrC both incises the 5' and 3' sides of the lesion. The N-terminal half is responsible for the 3' incision and the C-terminal half is responsible for the 5' incision. The sequence is that of UvrABC system protein C from Clostridium perfringens (strain ATCC 13124 / DSM 756 / JCM 1290 / NCIMB 6125 / NCTC 8237 / Type A).